Reading from the N-terminus, the 125-residue chain is UPF0325 protein Ping_0715 (125 aa).

The protein belongs to the UPF0325 family.

This chain is UPF0325 protein Ping_0715, found in Psychromonas ingrahamii (strain DSM 17664 / CCUG 51855 / 37).